The primary structure comprises 458 residues: NADH-quinone oxidoreductase subunit N (458 aa).

14 consecutive transmembrane segments (helical) span residues 4 to 24 (LLPEITLTLIALLGQFFAVII), 30 to 50 (IISNIIILLCILSIFLTFKYS), 62 to 82 (GINIGISKSIVLLFTIISMII), 94 to 114 (LKFEFITLILLSVVGIFVAIS), 118 to 138 (FLLLFCGMELTALTSYALAGF), 153 to 173 (FILGSLVSCLSLFGISFIYGF), 194 to 214 (LGLIIGIVLFLSSIFFKLSSV), 235 to 255 (FTAASKIGMVIVLLNISKLII), 261 to 281 (INYNLIKIIAILSMLFGAFGA), 290 to 310 (LMAYSTILNIGYVLIGVLLHN), 318 to 338 (LLYILIYAVGSIGFFTCLIML), 361 to 381 (IAAIISIVMFSMIGIPPLTGF), 397 to 417 (FILAYCGIFTSVVAAFYYLKV), and 438 to 458 (LLLINYLVVGFLLLGSFIISF).

The protein belongs to the complex I subunit 2 family. NDH-1 is composed of 14 different subunits. Subunits NuoA, H, J, K, L, M, N constitute the membrane sector of the complex.

It is found in the cell inner membrane. It carries out the reaction a quinone + NADH + 5 H(+)(in) = a quinol + NAD(+) + 4 H(+)(out). Its function is as follows. NDH-1 shuttles electrons from NADH, via FMN and iron-sulfur (Fe-S) centers, to quinones in the respiratory chain. The immediate electron acceptor for the enzyme in this species is believed to be ubiquinone. Couples the redox reaction to proton translocation (for every two electrons transferred, four hydrogen ions are translocated across the cytoplasmic membrane), and thus conserves the redox energy in a proton gradient. This is NADH-quinone oxidoreductase subunit N from Rickettsia felis (strain ATCC VR-1525 / URRWXCal2) (Rickettsia azadi).